Reading from the N-terminus, the 245-residue chain is Tetraspanin-6 (245 aa).

Residues 1 to 19 are Cytoplasmic-facing; the sequence is MASPSRRLQTKPVITCFKS. A helical transmembrane segment spans residues 20 to 40; sequence VLLIYTFIFWITGVILLAVGI. The Extracellular portion of the chain corresponds to 41-59; it reads WGKVSLENYFSLLNEKATN. The helical transmembrane segment at 60–80 threads the bilayer; sequence VPFVLIGTGTVIILLGTFGCF. Topologically, residues 81-93 are cytoplasmic; the sequence is ATCRASAWMLKLY. The helical transmembrane segment at 94–114 threads the bilayer; sequence AMFLTLIFLVELVAAIIGFVF. Over 115-208 the chain is Extracellular; the sequence is RHEIKNSLKN…IMVMTIIESE (94 aa). A glycan (N-linked (GlcNAc...) asparagine) is linked at Asn-134. Residues 209-229 form a helical membrane-spanning segment; that stretch reads MGVVAGISFGVACFQLIGIFL. Over 230-245 the chain is Cytoplasmic; that stretch reads AYCLSRAITNNQYEIV.

It belongs to the tetraspanin (TM4SF) family.

The protein resides in the membrane. This chain is Tetraspanin-6 (TSPAN6), found in Bos taurus (Bovine).